The chain runs to 278 residues: Shikimate dehydrogenase (NADP(+)) (278 aa).

Residues 18-20 and threonine 65 each bind shikimate; that span reads SRS. The Proton acceptor role is filled by lysine 69. Position 80 (glutamate 80) interacts with NADP(+). Asparagine 89 and aspartate 104 together coordinate shikimate. Residues 129–133 and leucine 218 each bind NADP(+); that span reads GAGGS. Tyrosine 220 lines the shikimate pocket. Residue glycine 241 coordinates NADP(+).

Belongs to the shikimate dehydrogenase family. Homodimer.

It catalyses the reaction shikimate + NADP(+) = 3-dehydroshikimate + NADPH + H(+). It functions in the pathway metabolic intermediate biosynthesis; chorismate biosynthesis; chorismate from D-erythrose 4-phosphate and phosphoenolpyruvate: step 4/7. Its function is as follows. Involved in the biosynthesis of the chorismate, which leads to the biosynthesis of aromatic amino acids. Catalyzes the reversible NADPH linked reduction of 3-dehydroshikimate (DHSA) to yield shikimate (SA). This is Shikimate dehydrogenase (NADP(+)) from Rhodopseudomonas palustris (strain ATCC BAA-98 / CGA009).